The sequence spans 35 residues: ECRYLFGGCSSTSDCCKHLSCRSDWKYCAWDGTFS.

Disulfide bonds link Cys2/Cys16, Cys9/Cys21, and Cys15/Cys28.

The protein belongs to the neurotoxin 10 (Hwtx-1) family. 09 (HaTx) subfamily. In terms of tissue distribution, expressed by the venom gland.

Its subcellular location is the secreted. Its function is as follows. Gating-modifier toxin that potently inhibits inactivation of the mammalian Nav1.1/SCN1A sodium channel (EC(50)=38 nM). Also moderately inhibits inactivation of Nav1.2/SCN2A (EC(50)=236 nM) and Nav1.3/SCN3A (EC(50)=220 nM) when the channels are expressed in oocytes without the beta-1 auxiliary subunit. Does not inhibit inactivation of Nav1.2/SCN2A when the channel is coexpressed with the beta-1 auxiliary subunit. When tested on Nav1.1/SCN1A channel, it enhances peak current amplitude and potently delays channel inactivation in a dose-dependent manner, leading to a large sustained current. It has no effect on the voltage-dependence of steady-state activation, and induces a depolarizing shift in the voltage dependence of inactivation. In addition, it does not modify the recovery from fast inactivation in Nav1.1/SCN1A. The binding affinity and subtype selectivity of the toxin towards Nav1.1/SCN1A channel is determined by residues within both the S1-S2 and S3-S4 loops of the domain IV voltage sensor of the channel. This toxin also weakly inhibits several subtypes of voltage-gated potassium channels. It moderately blocks Kv2.1/KCNB1 (23% inhibition at 100 nM), Kv2.2/KCNB2 (19.7% at 100 nM and 51% at 300 nM), Kv4.1/KCND1 (IC(50)=280 nM), Kv4.2/KCND2 (39% at 300 nM) and Kv4.3/KCND3 (43% at 300 nM). In vivo, intracerebroventricular injection into mice elicits convulsions, spasms, tremors and rapid death. When injected into mouse hindpaw, the toxin elicits an immediate and robust response to pain. However, intraplantar injection of toxin does not cause neurogenic inflammation or alter sensitivity to heat, indicative of a modality-specific effect on mechanosensitive neurons. In Dravet syndrome mice model, intracerebroventricular infusion of this peptide rescues mice from seizures and premature death. This is Delta-theraphotoxin-Hm1a from Heteroscodra maculata (Togo starburst tarantula).